A 208-amino-acid chain; its full sequence is Intraflagellar transport protein 43 homolog (208 aa).

Disordered stretches follow at residues 1-105 (MDDN…EDIP) and 187-208 (SELQ…PVCV). Residues 78 to 88 (AAAEEPEDRRL) show a composition bias toward basic and acidic residues.

The protein belongs to the IFT43 family. Component of the IFT complex A (IFT-A) complex.

It is found in the cytoplasm. The protein localises to the cytoskeleton. The protein resides in the cell projection. Its subcellular location is the cilium. As a component of IFT complex A (IFT-A), a complex required for retrograde ciliary transport and entry into cilia of G protein-coupled receptors (GPCRs), it is involved in ciliogenesis. Involved in retrograde ciliary transport along microtubules from the ciliary tip to the base. The sequence is that of Intraflagellar transport protein 43 homolog (ift43) from Danio rerio (Zebrafish).